The chain runs to 219 residues: UPF0502 protein Ppro_2903 (219 aa).

This sequence belongs to the UPF0502 family.

This is UPF0502 protein Ppro_2903 from Pelobacter propionicus (strain DSM 2379 / NBRC 103807 / OttBd1).